The chain runs to 170 residues: Brassinosteroid-responsive RING protein 1 (170 aa).

The helical transmembrane segment at 15–37 (LFVQTLSILGFIRTIVFSIFRFL) threads the bilayer. The RING-type; atypical zinc finger occupies 94–137 (CAVCLYEFEGEQEIRWLRNCRHIFHRSCLDRWMDHDQKTCPLCR).

This sequence belongs to the RING-type zinc finger family. In terms of tissue distribution, highly expressed in stems, rosette leaves and siliques, and moderately expressed in roots, cauline leaves and flower. Detected at low levels in seeds.

The protein resides in the membrane. In terms of biological role, may be involved in the brassinosteroids (BRs) signaling pathway and regulate the growth and development of rosette leaves. Seems to prevent over development of leaves and inflorescence stems. This is Brassinosteroid-responsive RING protein 1 from Arabidopsis thaliana (Mouse-ear cress).